The primary structure comprises 230 residues: Phosphoribosylaminoimidazole-succinocarboxamide synthase (230 aa).

The protein belongs to the SAICAR synthetase family.

It carries out the reaction 5-amino-1-(5-phospho-D-ribosyl)imidazole-4-carboxylate + L-aspartate + ATP = (2S)-2-[5-amino-1-(5-phospho-beta-D-ribosyl)imidazole-4-carboxamido]succinate + ADP + phosphate + 2 H(+). It functions in the pathway purine metabolism; IMP biosynthesis via de novo pathway; 5-amino-1-(5-phospho-D-ribosyl)imidazole-4-carboxamide from 5-amino-1-(5-phospho-D-ribosyl)imidazole-4-carboxylate: step 1/2. The polypeptide is Phosphoribosylaminoimidazole-succinocarboxamide synthase (Thermotoga petrophila (strain ATCC BAA-488 / DSM 13995 / JCM 10881 / RKU-1)).